The following is a 287-amino-acid chain: Casein kinase II subunit beta-1 (287 aa).

The tract at residues 1 to 97 (MYRDRGTVNS…ESDVSGSDGE (97 aa)) is disordered. Over residues 13–25 (EVVDRKRINDALE) the composition is skewed to basic and acidic residues. The span at 41-50 (GTVTAATTTA) shows a compositional bias: low complexity. Residues 78–97 (SDDESDTDSEESDVSGSDGE) are compositionally biased toward acidic residues.

This sequence belongs to the casein kinase 2 subunit beta family. In terms of assembly, heterotetramer of two catalytic alpha subunits and two regulatory beta subunits. Interacts with CCA1. Interacts with LHY. Post-translationally, phosphorylated by alpha subunit.

It is found in the cytoplasm. Its subcellular location is the cytosol. The protein localises to the nucleus. Functionally, plays a complex role in regulating the basal catalytic activity of the alpha subunit. The tetrameric holoenzyme CK2, composed of two alpha and two beta subunits, phosphorylates the transcription factor GBFl, resulting in stimulation of its DNA binding activity. CK2 phosphorylates the transcription factor PIF1 after an exposure to light, resulting in a proteasome-dependent degradation of PIF1 and promotion of photomorphogenesis. CK2 phosphorylates translation initiation factors. May participate in the regulation of the initiation of translation. Stimulates the binding of CCA1 to promoters. This is Casein kinase II subunit beta-1 (CKB1) from Arabidopsis thaliana (Mouse-ear cress).